A 367-amino-acid chain; its full sequence is Aurora kinase (367 aa).

Composition is skewed to polar residues over residues 1-29 (MQRN…TSRI) and 37-48 (HSPQQRNPNSKI). Residues 1–52 (MQRNSLVNIKLNANSPSKKTTTRPNTSRINKPWRISHSPQQRNPNSKIPSPV) form a disordered region. At serine 5 the chain carries Phosphoserine; by autocatalysis. Residue serine 76 is modified to Phosphoserine. The Protein kinase domain maps to 104–355 (FELGKKLGKG…LGDVKMHPWI (252 aa)). ATP contacts are provided by residues 110 to 118 (LGKGKFGKV) and lysine 133. Aspartate 227 functions as the Proton acceptor in the catalytic mechanism. The residue at position 260 (threonine 260) is a Phosphothreonine; by autocatalysis.

The protein belongs to the protein kinase superfamily. Ser/Thr protein kinase family. Aurora subfamily. As to quaternary structure, component of the CPC complex at least composed of IPL1, BIR1 and SLI15.

It is found in the nucleus. The protein resides in the cytoplasm. It localises to the cytoskeleton. The protein localises to the spindle. Its subcellular location is the chromosome. It is found in the centromere. The protein resides in the kinetochore. It catalyses the reaction L-seryl-[protein] + ATP = O-phospho-L-seryl-[protein] + ADP + H(+). It carries out the reaction L-threonyl-[protein] + ATP = O-phospho-L-threonyl-[protein] + ADP + H(+). Its function is as follows. Component of the chromosomal passenger complex (CPC), a complex that acts as a key regulator of chromosome segregation and cytokinesis. Has a role in error-correction of aberrent kinetochore-microtubule attachments to ensure that sister kinetochores become bioriented and connect to opposite poles by promoting spindle assembly checkpoint signaling. Acts in opposition to the phosphatase PP1. Not required for kinetochore detachment from microtubules during replication of centromeric DNA. Phosphorylates histone H3 to form H3S10ph during mitosis and meiosis. Phosphorylates CNN1, which contributes to the enrichment of CNN1 on anaphase kinetochores. Phosphorylates RGD1. This is Aurora kinase (IPL1) from Saccharomyces cerevisiae (strain ATCC 204508 / S288c) (Baker's yeast).